We begin with the raw amino-acid sequence, 888 residues long: Pumilio homology domain family member 4 (888 aa).

Phosphothreonine is present on residues threonine 205, threonine 212, and threonine 252. 2 disordered regions span residues 236-270 (KAKKPSVGANNTAKTRTQSISFDNTPSSTSFIPPT) and 467-551 (MNSA…RKIE). The span at 243–270 (GANNTAKTRTQSISFDNTPSSTSFIPPT) shows a compositional bias: polar residues. Serine 256 is subject to Phosphoserine. Low complexity-rich tracts occupy residues 478 to 499 (NNNSMSSHNDNDNIGNSNYNNK) and 521 to 543 (NNNNNNNNNNNNNNNSNATNSNS). Residues 539 to 888 (TNSNSAEKQR…RIIGMLHLDS (350 aa)) form the PUM-HD domain. Pumilio repeat units follow at residues 563 to 598 (QYIGSIHSLCKDQHGCRFLQKQLDILGSKAADAIFE), 599 to 634 (ETKDYTVELMTDSFGNYLIQKLLEEVTTEQRIVLTK), 635 to 671 (ISSPHFVEISLNPHGTRALQKLIECIKTDEEAQIVVD), 672 to 707 (SLRPYTVQLSKDLNGNHVIQKCLQRLKPENFQFIFD), 708 to 743 (AISDSCIDIATHRHGCCVLQRCLDHGTTEQCDNLCD), 744 to 783 (KLLALVDKLTLDPFGNYVVQYIITKEAEKNKYDYTHKIVH), 784 to 821 (LLKPRAIELSIHKFGSNVIEKILKTAIVSEPMILEILN), and 823 to 861 (GGETGIQSLLNDSYGNYVLQTALDISHKQNDYLYKRLSE).

In terms of biological role, is not essential for haploid growth, but may affect diploid formation. The chain is Pumilio homology domain family member 4 (PUF4) from Saccharomyces cerevisiae (strain ATCC 204508 / S288c) (Baker's yeast).